The following is a 126-amino-acid chain: Protein ApaG (126 aa).

The ApaG domain occupies 2 to 126 (SDPRYQIDVS…FRLAVPGALH (125 aa)).

The chain is Protein ApaG from Azotobacter vinelandii (strain DJ / ATCC BAA-1303).